The following is a 197-amino-acid chain: Holliday junction branch migration complex subunit RuvA (197 aa).

Positions 1 to 64 are domain I; it reads MYEYIKGTYM…EDFIGLYGFG (64 aa). The tract at residues 65–143 is domain II; that stretch reads SKEELELFNK…VNLDEGIQTD (79 aa). Positions 144-149 are flexible linker; sequence SNDIKV. The interval 149–197 is domain III; it reads VSSKILEEAKEALMSLGYSEKECEKALKNVEEKESLEIIIKESLKFLMN.

Belongs to the RuvA family. As to quaternary structure, homotetramer. Forms an RuvA(8)-RuvB(12)-Holliday junction (HJ) complex. HJ DNA is sandwiched between 2 RuvA tetramers; dsDNA enters through RuvA and exits via RuvB. An RuvB hexamer assembles on each DNA strand where it exits the tetramer. Each RuvB hexamer is contacted by two RuvA subunits (via domain III) on 2 adjacent RuvB subunits; this complex drives branch migration. In the full resolvosome a probable DNA-RuvA(4)-RuvB(12)-RuvC(2) complex forms which resolves the HJ.

The protein localises to the cytoplasm. Functionally, the RuvA-RuvB-RuvC complex processes Holliday junction (HJ) DNA during genetic recombination and DNA repair, while the RuvA-RuvB complex plays an important role in the rescue of blocked DNA replication forks via replication fork reversal (RFR). RuvA specifically binds to HJ cruciform DNA, conferring on it an open structure. The RuvB hexamer acts as an ATP-dependent pump, pulling dsDNA into and through the RuvAB complex. HJ branch migration allows RuvC to scan DNA until it finds its consensus sequence, where it cleaves and resolves the cruciform DNA. The protein is Holliday junction branch migration complex subunit RuvA of Hathewaya histolytica (Clostridium histolyticum).